A 158-amino-acid chain; its full sequence is C-type lection lectoxin-Enh3 (158 aa).

Residues 1-23 (MGQFTVVSLGLLAMFLSLSGAKG) form the signal peptide. 3 disulfide bridges follow: Cys26–Cys37, Cys54–Cys154, and Cys129–Cys146. Positions 33–155 (RNGVCNKLFP…CASLHPFICQ (123 aa)) constitute a C-type lectin domain. Positions 119–121 (EPN) match the Mannose-binding motif. Residues Glu127, Asn142, and Asp143 each contribute to the Ca(2+) site.

This sequence belongs to the true venom lectin family. In terms of tissue distribution, expressed by the venom gland.

It localises to the secreted. In terms of biological role, mannose-binding lectin which recognizes specific carbohydrate structures and agglutinates a variety of animal cells by binding to cell-surface glycoproteins and glycolipids. May be a calcium-dependent lectin. This Pseudoferania polylepis (Macleay's water snake) protein is C-type lection lectoxin-Enh3.